We begin with the raw amino-acid sequence, 70 residues long: Small ribosomal subunit protein bS21B (70 aa).

Belongs to the bacterial ribosomal protein bS21 family.

This Burkholderia thailandensis (strain ATCC 700388 / DSM 13276 / CCUG 48851 / CIP 106301 / E264) protein is Small ribosomal subunit protein bS21B.